Reading from the N-terminus, the 203-residue chain is Glycerol-3-phosphate acyltransferase (203 aa).

5 consecutive transmembrane segments (helical) span residues 13–33 (TLAC…LILT), 62–82 (LAAA…AIAS), 88–108 (AGIA…WLSF), 118–138 (IGVL…IWLA), and 159–179 (IALY…MTAI).

The protein belongs to the PlsY family. In terms of assembly, probably interacts with PlsX.

Its subcellular location is the cell inner membrane. It catalyses the reaction an acyl phosphate + sn-glycerol 3-phosphate = a 1-acyl-sn-glycero-3-phosphate + phosphate. It functions in the pathway lipid metabolism; phospholipid metabolism. Its function is as follows. Catalyzes the transfer of an acyl group from acyl-phosphate (acyl-PO(4)) to glycerol-3-phosphate (G3P) to form lysophosphatidic acid (LPA). This enzyme utilizes acyl-phosphate as fatty acyl donor, but not acyl-CoA or acyl-ACP. The chain is Glycerol-3-phosphate acyltransferase from Rhizobium meliloti (strain 1021) (Ensifer meliloti).